A 267-amino-acid polypeptide reads, in one-letter code: Malonyl-[acyl-carrier protein] O-methyltransferase (267 aa).

This sequence belongs to the methyltransferase superfamily.

It catalyses the reaction malonyl-[ACP] + S-adenosyl-L-methionine = malonyl-[ACP] methyl ester + S-adenosyl-L-homocysteine. It participates in cofactor biosynthesis; biotin biosynthesis. Functionally, converts the free carboxyl group of a malonyl-thioester to its methyl ester by transfer of a methyl group from S-adenosyl-L-methionine (SAM). It allows to synthesize pimeloyl-ACP via the fatty acid synthetic pathway. This is Malonyl-[acyl-carrier protein] O-methyltransferase from Yersinia pestis.